We begin with the raw amino-acid sequence, 267 residues long: Phosphonates import ATP-binding protein PhnC 1 (267 aa).

Positions 3 to 247 (LSLDGVDLVH…ALDALYANEQ (245 aa)) constitute an ABC transporter domain. Residue 36 to 43 (GPSGAGKT) coordinates ATP.

The protein belongs to the ABC transporter superfamily. Phosphonates importer (TC 3.A.1.9.1) family. The complex is composed of two ATP-binding proteins (PhnC), two transmembrane proteins (PhnE) and a solute-binding protein (PhnD).

The protein resides in the cell inner membrane. The catalysed reaction is phosphonate(out) + ATP + H2O = phosphonate(in) + ADP + phosphate + H(+). In terms of biological role, part of the ABC transporter complex PhnCDE involved in phosphonates import. Responsible for energy coupling to the transport system. The chain is Phosphonates import ATP-binding protein PhnC 1 from Pseudomonas aeruginosa (strain ATCC 15692 / DSM 22644 / CIP 104116 / JCM 14847 / LMG 12228 / 1C / PRS 101 / PAO1).